The chain runs to 92 residues: RNA-binding protein Hfq (92 aa).

Positions 11–71 (DRFLNHLRVN…ISTIIPSSYV (61 aa)) constitute a Sm domain.

It belongs to the Hfq family. In terms of assembly, homohexamer.

Functionally, RNA chaperone that binds small regulatory RNA (sRNAs) and mRNAs to facilitate mRNA translational regulation in response to envelope stress, environmental stress and changes in metabolite concentrations. Also binds with high specificity to tRNAs. This chain is RNA-binding protein Hfq, found in Thermotoga maritima (strain ATCC 43589 / DSM 3109 / JCM 10099 / NBRC 100826 / MSB8).